The sequence spans 228 residues: 7-cyano-7-deazaguanine synthase (228 aa).

Residue 8–18 coordinates ATP; that stretch reads LSGGLDSTTCL. Residues Cys-188, Cys-198, Cys-201, and Cys-204 each contribute to the Zn(2+) site.

It belongs to the QueC family. Requires Zn(2+) as cofactor.

It catalyses the reaction 7-carboxy-7-deazaguanine + NH4(+) + ATP = 7-cyano-7-deazaguanine + ADP + phosphate + H2O + H(+). It participates in purine metabolism; 7-cyano-7-deazaguanine biosynthesis. In terms of biological role, catalyzes the ATP-dependent conversion of 7-carboxy-7-deazaguanine (CDG) to 7-cyano-7-deazaguanine (preQ(0)). This is 7-cyano-7-deazaguanine synthase from Legionella pneumophila (strain Corby).